The sequence spans 47 residues: Large ribosomal subunit protein eL40 (47 aa).

It belongs to the eukaryotic ribosomal protein eL40 family.

This chain is Large ribosomal subunit protein eL40, found in Methanocaldococcus jannaschii (strain ATCC 43067 / DSM 2661 / JAL-1 / JCM 10045 / NBRC 100440) (Methanococcus jannaschii).